The primary structure comprises 414 residues: Serine/threonine transporter SstT (414 aa).

8 helical membrane-spanning segments follow: residues 16–36 (GSLV…AWIS), 46–66 (LGTL…LMLV), 84–104 (ILFL…VFSF), 143–163 (ALLN…GFAL), 180–200 (AVTF…FGLV), 219–239 (LVVL…LLVF), 300–320 (MAGA…TLGV), and 332–352 (VVAS…LLLI).

This sequence belongs to the dicarboxylate/amino acid:cation symporter (DAACS) (TC 2.A.23) family.

Its subcellular location is the cell inner membrane. The enzyme catalyses L-serine(in) + Na(+)(in) = L-serine(out) + Na(+)(out). The catalysed reaction is L-threonine(in) + Na(+)(in) = L-threonine(out) + Na(+)(out). Involved in the import of serine and threonine into the cell, with the concomitant import of sodium (symport system). In Salmonella newport (strain SL254), this protein is Serine/threonine transporter SstT.